We begin with the raw amino-acid sequence, 562 residues long: NAD-dependent malic enzyme (562 aa).

Y101 acts as the Proton donor in catalysis. R154 lines the NAD(+) pocket. K172 (proton acceptor) is an active-site residue. 3 residues coordinate a divalent metal cation: E243, D244, and D267. Positions 267 and 415 each coordinate NAD(+).

The protein belongs to the malic enzymes family. Homotetramer. It depends on Mg(2+) as a cofactor. Mn(2+) serves as cofactor.

The enzyme catalyses (S)-malate + NAD(+) = pyruvate + CO2 + NADH. It catalyses the reaction oxaloacetate + H(+) = pyruvate + CO2. This chain is NAD-dependent malic enzyme, found in Shewanella sediminis (strain HAW-EB3).